The primary structure comprises 753 residues: 5-methyltetrahydropteroyltriglutamate--homocysteine methyltransferase (753 aa).

Residues 17–20 and Lys-117 contribute to the 5-methyltetrahydropteroyltri-L-glutamate site; that span reads RELK. Residues 431-433 and Glu-484 contribute to the L-homocysteine site; that span reads IGS. Residues 431-433 and Glu-484 each bind L-methionine; that span reads IGS. 5-methyltetrahydropteroyltri-L-glutamate is bound by residues 515–516 and Trp-561; that span reads RC. Asp-599 contacts L-homocysteine. Asp-599 contacts L-methionine. Glu-605 is a binding site for 5-methyltetrahydropteroyltri-L-glutamate. The Zn(2+) site is built by His-641, Cys-643, and Glu-665. Catalysis depends on His-694, which acts as the Proton donor. Position 726 (Cys-726) interacts with Zn(2+).

This sequence belongs to the vitamin-B12 independent methionine synthase family. The cofactor is Zn(2+).

It catalyses the reaction 5-methyltetrahydropteroyltri-L-glutamate + L-homocysteine = tetrahydropteroyltri-L-glutamate + L-methionine. It participates in amino-acid biosynthesis; L-methionine biosynthesis via de novo pathway; L-methionine from L-homocysteine (MetE route): step 1/1. Catalyzes the transfer of a methyl group from 5-methyltetrahydrofolate to homocysteine resulting in methionine formation. This chain is 5-methyltetrahydropteroyltriglutamate--homocysteine methyltransferase, found in Shigella flexneri.